A 424-amino-acid polypeptide reads, in one-letter code: Serine hydroxymethyltransferase (424 aa).

Residues Leu-126 and 130 to 132 (GHL) each bind (6S)-5,6,7,8-tetrahydrofolate. Residue Lys-235 is modified to N6-(pyridoxal phosphate)lysine. Residue 359-361 (SPF) participates in (6S)-5,6,7,8-tetrahydrofolate binding.

Belongs to the SHMT family. In terms of assembly, homodimer. The cofactor is pyridoxal 5'-phosphate.

It localises to the cytoplasm. It carries out the reaction (6R)-5,10-methylene-5,6,7,8-tetrahydrofolate + glycine + H2O = (6S)-5,6,7,8-tetrahydrofolate + L-serine. The protein operates within one-carbon metabolism; tetrahydrofolate interconversion. It functions in the pathway amino-acid biosynthesis; glycine biosynthesis; glycine from L-serine: step 1/1. Its function is as follows. Catalyzes the reversible interconversion of serine and glycine with tetrahydrofolate (THF) serving as the one-carbon carrier. This reaction serves as the major source of one-carbon groups required for the biosynthesis of purines, thymidylate, methionine, and other important biomolecules. Also exhibits THF-independent aldolase activity toward beta-hydroxyamino acids, producing glycine and aldehydes, via a retro-aldol mechanism. In Prochlorococcus marinus (strain MIT 9303), this protein is Serine hydroxymethyltransferase.